Consider the following 130-residue polypeptide: ATP synthase epsilon chain (130 aa).

Belongs to the ATPase epsilon chain family. In terms of assembly, F-type ATPases have 2 components, CF(1) - the catalytic core - and CF(0) - the membrane proton channel. CF(1) has five subunits: alpha(3), beta(3), gamma(1), delta(1), epsilon(1). CF(0) has three main subunits: a, b and c.

It localises to the cell inner membrane. Produces ATP from ADP in the presence of a proton gradient across the membrane. The protein is ATP synthase epsilon chain of Sulfurimonas denitrificans (strain ATCC 33889 / DSM 1251) (Thiomicrospira denitrificans (strain ATCC 33889 / DSM 1251)).